Consider the following 318-residue polypeptide: NADH-ubiquinone oxidoreductase chain 1 (318 aa).

Helical transmembrane passes span 2–22 (LLTN…FLTL), 69–89 (LMFI…WAPL), 102–122 (ILFI…SGWA), 147–167 (AIIL…TLTI), 172–192 (MWLI…TLAE), 231–251 (IILM…NPLF), 253–273 (ELHT…FLWI), and 294–314 (LPLT…LAGI).

Belongs to the complex I subunit 1 family.

It localises to the mitochondrion inner membrane. It catalyses the reaction a ubiquinone + NADH + 5 H(+)(in) = a ubiquinol + NAD(+) + 4 H(+)(out). In terms of biological role, core subunit of the mitochondrial membrane respiratory chain NADH dehydrogenase (Complex I) that is believed to belong to the minimal assembly required for catalysis. Complex I functions in the transfer of electrons from NADH to the respiratory chain. The immediate electron acceptor for the enzyme is believed to be ubiquinone. The polypeptide is NADH-ubiquinone oxidoreductase chain 1 (MT-ND1) (Bradypus variegatus (Brown-throated three-fingered sloth)).